The primary structure comprises 103 residues: Pro-glucagon (103 aa).

It belongs to the glucagon family.

The protein localises to the secreted. In terms of biological role, plays a key role in glucose metabolism and homeostasis. Regulates blood glucose by increasing gluconeogenesis and decreasing glycolysis. The chain is Pro-glucagon (gcg) from Aquarana catesbeiana (American bullfrog).